The chain runs to 439 residues: Mitochondrial distribution and morphology protein 12 (439 aa).

One can recognise an SMP-LTD domain in the interval 1–439 (MSIDINWEAA…VYPSFWTFLV (439 aa)). The span at 71–84 (EEDEGDEDFSDDQD) shows a compositional bias: acidic residues. 3 disordered regions span residues 71–104 (EEDEGDEDFSDDQDGAPKHPPTIATERSGAGTWQ), 182–278 (TPLA…HEKK), and 362–385 (YIPGINPIGGGASGGAASSRRRDD). Basic and acidic residues predominate over residues 212 to 229 (DYPRPVHRQTDTDIDSGH). The span at 230–255 (SRPSTADTLNSINSQRISNPALSHPH) shows a compositional bias: polar residues. Residues 256–269 (SSNESHPDTRDHSP) show a composition bias toward basic and acidic residues.

It belongs to the MDM12 family. In terms of assembly, component of the ER-mitochondria encounter structure (ERMES) or MDM complex, composed of MMM1, MDM10, MDM12 and MDM34. An MMM1 homodimer associates with one molecule of MDM12 on each side in a pairwise head-to-tail manner, and the SMP-LTD domains of MMM1 and MDM12 generate a continuous hydrophobic tunnel for phospholipid trafficking.

Its subcellular location is the mitochondrion outer membrane. The protein localises to the endoplasmic reticulum membrane. In terms of biological role, component of the ERMES/MDM complex, which serves as a molecular tether to connect the endoplasmic reticulum (ER) and mitochondria. Components of this complex are involved in the control of mitochondrial shape and protein biogenesis, and function in nonvesicular lipid trafficking between the ER and mitochondria. MDM12 is required for the interaction of the ER-resident membrane protein MMM1 and the outer mitochondrial membrane-resident beta-barrel protein MDM10. The MDM12-MMM1 subcomplex functions in the major beta-barrel assembly pathway that is responsible for biogenesis of all mitochondrial outer membrane beta-barrel proteins, and acts in a late step after the SAM complex. The MDM10-MDM12-MMM1 subcomplex further acts in the TOM40-specific pathway after the action of the MDM12-MMM1 complex. Essential for establishing and maintaining the structure of mitochondria and maintenance of mtDNA nucleoids. This is Mitochondrial distribution and morphology protein 12 from Uncinocarpus reesii (strain UAMH 1704).